We begin with the raw amino-acid sequence, 235 residues long: Elongation factor Tu, chloroplastic (235 aa).

Residues 1 to 125 (KNMITGAAQM…EVDNYIPLPT (125 aa)) enclose the tr-type G domain. 47-50 (NKAD) provides a ligand contact to GTP.

This sequence belongs to the TRAFAC class translation factor GTPase superfamily. Classic translation factor GTPase family. EF-Tu/EF-1A subfamily.

It localises to the plastid. The protein resides in the chloroplast. The enzyme catalyses GTP + H2O = GDP + phosphate + H(+). In terms of biological role, GTP hydrolase that promotes the GTP-dependent binding of aminoacyl-tRNA to the A-site of ribosomes during protein biosynthesis. This Bryopsis plumosa (Green alga) protein is Elongation factor Tu, chloroplastic (tufA).